The following is a 417-amino-acid chain: D-amino acid dehydrogenase (417 aa).

3-17 is a binding site for FAD; that stretch reads VIVLGSGVIGVTAAW.

The protein belongs to the DadA oxidoreductase family. It depends on FAD as a cofactor.

The catalysed reaction is a D-alpha-amino acid + A + H2O = a 2-oxocarboxylate + AH2 + NH4(+). It participates in amino-acid degradation; D-alanine degradation; NH(3) and pyruvate from D-alanine: step 1/1. Oxidative deamination of D-amino acids. This Methylobacillus flagellatus (strain ATCC 51484 / DSM 6875 / VKM B-1610 / KT) protein is D-amino acid dehydrogenase.